A 367-amino-acid chain; its full sequence is tRNA pseudouridine synthase D (367 aa).

Residue aspartate 80 is the Nucleophile of the active site. The TRUD domain occupies 156–316 (GIPNWFGEQR…LKQERRALRL (161 aa)).

Belongs to the pseudouridine synthase TruD family.

It catalyses the reaction uridine(13) in tRNA = pseudouridine(13) in tRNA. Functionally, responsible for synthesis of pseudouridine from uracil-13 in transfer RNAs. The chain is tRNA pseudouridine synthase D from Xanthomonas campestris pv. campestris (strain 8004).